Here is a 305-residue protein sequence, read N- to C-terminus: Serine/threonine-protein phosphatase 4 catalytic subunit (305 aa).

Mn(2+) is bound by residues aspartate 52, histidine 54, aspartate 80, and asparagine 112. Histidine 113 serves as the catalytic Proton donor. Residues histidine 162 and histidine 236 each coordinate Mn(2+).

This sequence belongs to the PPP phosphatase family. PP-4 (PP-X) subfamily. As to quaternary structure, serine/threonine-protein phosphatase 4 (PP4) occurs in different assemblies of the catalytic and one or more regulatory subunits. Probably part of a PP4 complex containing ppp4c and ppp4r2. Interacts with smkA. It depends on Mn(2+) as a cofactor.

The protein resides in the cytoplasm. It localises to the nucleus. It catalyses the reaction O-phospho-L-seryl-[protein] + H2O = L-seryl-[protein] + phosphate. The catalysed reaction is O-phospho-L-threonyl-[protein] + H2O = L-threonyl-[protein] + phosphate. In terms of biological role, required for development, chemotaxis and the expression of numerous genes. This chain is Serine/threonine-protein phosphatase 4 catalytic subunit (ppp4c), found in Dictyostelium discoideum (Social amoeba).